Consider the following 112-residue polypeptide: uncharacterized protein (112 aa).

An N-terminal signal peptide occupies residues 1–21; it reads MKTLFTSVVLCGALVVSSSFA. HhH domains are found at residues 49 to 79 and 80 to 109; these read DKLNINTATASEIQKSLTGIGAKKAEAIVQY and REKHGNFXNAEQLLEVQGIGKATLEKNRDR.

This is an uncharacterized protein from Haemophilus influenzae (strain ATCC 51907 / DSM 11121 / KW20 / Rd).